The following is a 73-amino-acid chain: Large ribosomal subunit protein bL31 (73 aa).

Zn(2+)-binding residues include Cys-16, Cys-18, Cys-37, and Cys-40.

This sequence belongs to the bacterial ribosomal protein bL31 family. Type A subfamily. In terms of assembly, part of the 50S ribosomal subunit. Zn(2+) is required as a cofactor.

In terms of biological role, binds the 23S rRNA. The polypeptide is Large ribosomal subunit protein bL31 (Pseudomonas syringae pv. syringae (strain B728a)).